A 163-amino-acid polypeptide reads, in one-letter code: Ribosome maturation factor RimM (163 aa).

The PRC barrel domain occupies 94–162 (ADEYYYIDLI…DHLVIAADFI (69 aa)).

This sequence belongs to the RimM family. In terms of assembly, binds ribosomal protein uS19.

It is found in the cytoplasm. An accessory protein needed during the final step in the assembly of 30S ribosomal subunit, possibly for assembly of the head region. Essential for efficient processing of 16S rRNA. May be needed both before and after RbfA during the maturation of 16S rRNA. It has affinity for free ribosomal 30S subunits but not for 70S ribosomes. The sequence is that of Ribosome maturation factor RimM from Zymomonas mobilis subsp. mobilis (strain ATCC 31821 / ZM4 / CP4).